The chain runs to 300 residues: Acetylglutamate kinase (300 aa).

Residues glycine 73–glycine 74, arginine 95, and asparagine 197 each bind substrate.

It belongs to the acetylglutamate kinase family. ArgB subfamily.

The protein resides in the cytoplasm. The catalysed reaction is N-acetyl-L-glutamate + ATP = N-acetyl-L-glutamyl 5-phosphate + ADP. Its pathway is amino-acid biosynthesis; L-arginine biosynthesis; N(2)-acetyl-L-ornithine from L-glutamate: step 2/4. Its function is as follows. Catalyzes the ATP-dependent phosphorylation of N-acetyl-L-glutamate. This chain is Acetylglutamate kinase, found in Bordetella parapertussis (strain 12822 / ATCC BAA-587 / NCTC 13253).